Here is a 259-residue protein sequence, read N- to C-terminus: HTH-type transcriptional regulator Rv1931c (259 aa).

Over residues 104-121 (SHRRHRPRAGTGRRRPRH) the composition is skewed to basic residues. The disordered stretch occupies residues 104–170 (SHRRHRPRAG…GAGGHRGRAG (67 aa)). An HTH araC/xylS-type domain is found at 174-257 (RIGELAQRAA…GISPDQYRKA (84 aa)). DNA-binding regions (H-T-H motif) lie at residues 176–197 (GELAQRAAMSPRHFTRVFSDEV) and 224–247 (VVAIAARCGFGTAETMRRSFIRRV).

In terms of biological role, controls the expression of genes important for virulence. The polypeptide is HTH-type transcriptional regulator Rv1931c (Mycobacterium tuberculosis (strain ATCC 25618 / H37Rv)).